Reading from the N-terminus, the 132-residue chain is Small ribosomal subunit protein uS8 (132 aa).

Belongs to the universal ribosomal protein uS8 family. Part of the 30S ribosomal subunit. Contacts proteins S5 and S12.

Functionally, one of the primary rRNA binding proteins, it binds directly to 16S rRNA central domain where it helps coordinate assembly of the platform of the 30S subunit. This is Small ribosomal subunit protein uS8 from Corynebacterium jeikeium (strain K411).